A 1068-amino-acid polypeptide reads, in one-letter code: Protein AF-10 (1068 aa).

Residues 22-74 (IGGCCVCSDERGWAENPLVYCDGHGCSVAVHQACYGIVQVPTGPWFCRKCESQ) form a PHD-type 1 zinc finger. The C2HC pre-PHD-type zinc-finger motif lies at 79–112 (RVRCELCPHKDGALKRTDNGGWAHVVCALYIPEV). The tract at residues 80-287 (VRCELCPHKD…SLKRLEDTTA (208 aa)) is self-association. A required for interaction with histone H3 region spans residues 106-190 (ALYIPEVQFA…EGNGADNVQY (85 aa)). A PHD-type 2 zinc finger spans residues 135–198 (KTCYICDEQG…QYCGYCKYHF (64 aa)). The segment at 141 to 233 (DEQGRESKAA…QDKHHEKEKK (93 aa)) is interaction with FSTL3. The tract at residues 206 to 260 (RGSNRSYDQSLSDSSSHSQDKHHEKEKKKYKEKDKHKQKHKKQPEPSPALVPSLT) is disordered. The segment covering 211–222 (SYDQSLSDSSSH) has biased composition (low complexity). Position 217 is a phosphoserine (Ser-217). The span at 223–240 (SQDKHHEKEKKKYKEKDK) shows a compositional bias: basic and acidic residues. A Phosphoserine modification is found at Ser-252. A Glycyl lysine isopeptide (Lys-Gly) (interchain with G-Cter in SUMO2) cross-link involves residue Lys-280. Residues 291–305 (NANFQEVSAHTSSGK) are compositionally biased toward polar residues. Residues 291–505 (NANFQEVSAH…SSASPTSSVA (215 aa)) are disordered. A compositionally biased stretch (basic and acidic residues) spans 306 to 317 (DVSETRGSEGKG). The tract at residues 311–674 (RGSEGKGKKS…QDLGDNSRNL (364 aa)) is DNA-binding. A compositionally biased stretch (low complexity) spans 352 to 372 (SFSGTPGSVKSSSGSSVQSPQ). Composition is skewed to polar residues over residues 387–396 (YSHSQQSSAT) and 404–446 (SGSQ…SSLP). Ser-436 carries the post-translational modification Phosphoserine. The span at 465–483 (EKKRKGNKQSKHGPGRPKG) shows a compositional bias: basic residues. Positions 490–505 (VSHLSVSSASPTSSVA) are enriched in low complexity. The residue at position 532 (Ser-532) is a Phosphoserine. Residues 583-594 (SGSGSSTPVSSS) are compositionally biased toward low complexity. Disordered stretches follow at residues 583-612 (SGSG…ALSP) and 660-708 (NNQT…SLEN). 2 stretches are compositionally biased toward polar residues: residues 595-604 (HLPQQSSGHL) and 660-673 (NNQT…NSRN). The segment covering 674-694 (LVGRGSSPRGSLSPRSPVSSL) has biased composition (low complexity). A phosphoserine mark is found at Ser-684, Ser-686, and Ser-689. The transactivation domain; required for DOT1L-binding stretch occupies residues 703–784 (NSSLENLPPV…NAQLSVPFPT (82 aa)). The interval 750–778 (LQVENRRLEEQIKNLTAKKERLQLLNAQL) is leucine-zipper. A compositionally biased stretch (polar residues) spans 800–814 (AQTAPTTDSLNSSKS). The interval 800–865 (AQTAPTTDSL…SPAQQGSGVS (66 aa)) is disordered. Composition is skewed to low complexity over residues 834 to 848 (LTSS…SALS) and 855 to 865 (QSPAQQGSGVS).

In terms of assembly, self-associates. Interacts with FSTL3 isoform 2; the interaction enhances MLLT10 in vitro transcriptional activity and self-association. Interacts with YEATS4. Interacts with SS18. Interacts with DOT1L; this interaction also occurs with the KMT2A/MLL1 fusion protein. Interacts with histone H3; interaction is necessary for MLLT10 binding to nucleosomes; interaction is inhibited by histone H3 'Lys-27' methylations (H3K27me1, H3K27me2 and H3K27me3) amd acetylation; interaction stabilizes association of MLLT10 at chromatin; interaction is essential for histone H3 'Lys-79' dimethylation (H3K79me2). In terms of tissue distribution, expressed abundantly in testis.

It is found in the nucleus. Its function is as follows. Probably involved in transcriptional regulation. In vitro or as fusion protein with KMT2A/MLL1 has transactivation activity. Binds to cruciform DNA. In cells, binding to unmodified histone H3 regulates DOT1L functions including histone H3 'Lys-79' dimethylation (H3K79me2) and gene activation. The chain is Protein AF-10 from Homo sapiens (Human).